The chain runs to 361 residues: MNKTVVVAMSGGVDSSVVAYLLKNYTSYKVLGLFMKNWEEEDGEGLCSTAKDYEDVEKVAGQLDIPYYTVSFAKEYRERVFSRFLTGYSEGYTPNPDVLCNREIKFDLLQKKVRELGGDFLATGHYCRVSPDENGVNLLRGIDPQKDQSYFLCGTRKESLENVIFPLGDKTKTEVRSIAAQAGLATAQKRDSTGICFIGKRPFKSFLEKFVPNLEGNIVDYDSQRVVGHHEGAHYYTIGQRRGLDLGGSEKPCYVVGKDMEKNIVYIVRGEDHPLLYQTELTARELNWFVSPKSITTCSAKVRYRSNDEECEILLRGEDEVLVRFASPVKAITPGQAIAFYDGERCLGGGVIEISMTPQSV.

Residues 8–15 and methionine 35 contribute to the ATP site; that span reads AMSGGVDS. Residues 95-97 are interaction with target base in tRNA; that stretch reads NPD. Cysteine 100 (nucleophile) is an active-site residue. Cysteine 100 and cysteine 196 are disulfide-bonded. An ATP-binding site is contributed by glycine 124. Residues 146–148 form an interaction with tRNA region; it reads KDQ. Cysteine 196 functions as the Cysteine persulfide intermediate in the catalytic mechanism. Positions 303 to 304 are interaction with tRNA; the sequence is RY.

The protein belongs to the MnmA/TRMU family.

The protein resides in the cytoplasm. The enzyme catalyses S-sulfanyl-L-cysteinyl-[protein] + uridine(34) in tRNA + AH2 + ATP = 2-thiouridine(34) in tRNA + L-cysteinyl-[protein] + A + AMP + diphosphate + H(+). Its function is as follows. Catalyzes the 2-thiolation of uridine at the wobble position (U34) of tRNA, leading to the formation of s(2)U34. This is tRNA-specific 2-thiouridylase MnmA from Chlamydia felis (strain Fe/C-56) (Chlamydophila felis).